The primary structure comprises 160 residues: Transcriptional regulator MraZ (160 aa).

2 SpoVT-AbrB domains span residues 5 to 50 (KFDT…GDQV) and 93 to 136 (AVEC…SQAV).

The protein belongs to the MraZ family. Forms oligomers.

The protein localises to the cytoplasm. It localises to the nucleoid. The protein is Transcriptional regulator MraZ of Geobacter sp. (strain M21).